The chain runs to 502 residues: Chromosomal replication initiator protein DnaA (502 aa).

Residues 1–112 (MADDLSLGFT…PSTDHIDDNS (112 aa)) are domain I, interacts with DnaA modulators. Residues 113-161 (SSADVLLTDDCGTDTDENYGEPLTGEYQGLPTYFTERPHHTESTVTGGT) form a domain II region. Residues 162–378 (SLNRRYTFET…GALIRVTAFA (217 aa)) form a domain III, AAA+ region region. 4 residues coordinate ATP: glycine 206, glycine 208, lysine 209, and threonine 210. Residues 379 to 502 (SLNKTAIDKA…TTRIRQRSKR (124 aa)) are domain IV, binds dsDNA.

Belongs to the DnaA family. As to quaternary structure, oligomerizes as a right-handed, spiral filament on DNA at oriC.

It localises to the cytoplasm. In terms of biological role, plays an essential role in the initiation and regulation of chromosomal replication. ATP-DnaA binds to the origin of replication (oriC) to initiate formation of the DNA replication initiation complex once per cell cycle. Binds the DnaA box (a 9 base pair repeat at the origin) and separates the double-stranded (ds)DNA. Forms a right-handed helical filament on oriC DNA; dsDNA binds to the exterior of the filament while single-stranded (ss)DNA is stabiized in the filament's interior. The ATP-DnaA-oriC complex binds and stabilizes one strand of the AT-rich DNA unwinding element (DUE), permitting loading of DNA polymerase. After initiation quickly degrades to an ADP-DnaA complex that is not apt for DNA replication. Binds acidic phospholipids. This chain is Chromosomal replication initiator protein DnaA, found in Mycobacterium leprae (strain TN).